A 70-amino-acid polypeptide reads, in one-letter code: Small ribosomal subunit protein bS21 (70 aa).

This sequence belongs to the bacterial ribosomal protein bS21 family.

In Cupriavidus pinatubonensis (strain JMP 134 / LMG 1197) (Cupriavidus necator (strain JMP 134)), this protein is Small ribosomal subunit protein bS21.